The primary structure comprises 109 residues: Small ribosomal subunit protein bS6 (109 aa).

The protein belongs to the bacterial ribosomal protein bS6 family.

Its function is as follows. Binds together with bS18 to 16S ribosomal RNA. This chain is Small ribosomal subunit protein bS6, found in Ehrlichia chaffeensis (strain ATCC CRL-10679 / Arkansas).